Here is a 270-residue protein sequence, read N- to C-terminus: L-cystine-binding protein TcyK (270 aa).

Positions 1-20 (MKTKTAFMAILFSLITVLSA) are cleaved as a signal peptide. A lipid anchor (N-palmitoyl cysteine) is attached at C21. C21 carries the S-diacylglycerol cysteine lipid modification.

This sequence belongs to the bacterial solute-binding protein 3 family. As to quaternary structure, the complex is composed of two ATP-binding proteins (TcyN), two transmembrane proteins (TcyL and TcyM) and two solute-binding proteins (TcyJ and TcyK).

Its subcellular location is the cell membrane. Part of the ABC transporter complex TcyJKLMN involved in L-cystine import. Is also involved in cystathionine, djenkolate, and S-methylcysteine transport. This chain is L-cystine-binding protein TcyK (tcyK), found in Bacillus subtilis (strain 168).